The following is a 563-amino-acid chain: Arginine--tRNA ligase (563 aa).

The 'HIGH' region signature appears at 122–132 (PNIAKPMSMGH).

Belongs to the class-I aminoacyl-tRNA synthetase family. As to quaternary structure, monomer.

Its subcellular location is the cytoplasm. It catalyses the reaction tRNA(Arg) + L-arginine + ATP = L-arginyl-tRNA(Arg) + AMP + diphosphate. The polypeptide is Arginine--tRNA ligase (Ligilactobacillus salivarius (strain UCC118) (Lactobacillus salivarius)).